The sequence spans 413 residues: Gamma-glutamyl phosphate reductase (413 aa).

It belongs to the gamma-glutamyl phosphate reductase family.

Its subcellular location is the cytoplasm. The catalysed reaction is L-glutamate 5-semialdehyde + phosphate + NADP(+) = L-glutamyl 5-phosphate + NADPH + H(+). The protein operates within amino-acid biosynthesis; L-proline biosynthesis; L-glutamate 5-semialdehyde from L-glutamate: step 2/2. Its function is as follows. Catalyzes the NADPH-dependent reduction of L-glutamate 5-phosphate into L-glutamate 5-semialdehyde and phosphate. The product spontaneously undergoes cyclization to form 1-pyrroline-5-carboxylate. This Salinispora arenicola (strain CNS-205) protein is Gamma-glutamyl phosphate reductase.